A 275-amino-acid polypeptide reads, in one-letter code: NH(3)-dependent NAD(+) synthetase (275 aa).

Gly50 to Ser57 contacts ATP. Asp56 is a binding site for Mg(2+). Arg147 serves as a coordination point for deamido-NAD(+). Residue Thr167 coordinates ATP. Position 172 (Glu172) interacts with Mg(2+). Deamido-NAD(+) is bound by residues Lys180 and Asp187. ATP is bound by residues Lys196 and Thr218. His267–Lys268 contributes to the deamido-NAD(+) binding site.

This sequence belongs to the NAD synthetase family. As to quaternary structure, homodimer.

It carries out the reaction deamido-NAD(+) + NH4(+) + ATP = AMP + diphosphate + NAD(+) + H(+). It functions in the pathway cofactor biosynthesis; NAD(+) biosynthesis; NAD(+) from deamido-NAD(+) (ammonia route): step 1/1. Catalyzes the ATP-dependent amidation of deamido-NAD to form NAD. Uses ammonia as a nitrogen source. In Pseudomonas fluorescens (strain Pf0-1), this protein is NH(3)-dependent NAD(+) synthetase.